A 458-amino-acid chain; its full sequence is Tol-Pal system protein TolB (458 aa).

The N-terminal stretch at 1-23 (MSSVIRKWALTALMAVSSTALFA) is a signal peptide.

It belongs to the TolB family. In terms of assembly, the Tol-Pal system is composed of five core proteins: the inner membrane proteins TolA, TolQ and TolR, the periplasmic protein TolB and the outer membrane protein Pal. They form a network linking the inner and outer membranes and the peptidoglycan layer.

It is found in the periplasm. Part of the Tol-Pal system, which plays a role in outer membrane invagination during cell division and is important for maintaining outer membrane integrity. This Zymomonas mobilis subsp. mobilis (strain ATCC 31821 / ZM4 / CP4) protein is Tol-Pal system protein TolB.